A 175-amino-acid polypeptide reads, in one-letter code: MLSVMVSSSLVLIVFFLGASEEAKPATTTIKNTKPQCRPEDYATRLQDLRVTFHRVKPTLQREDDYSVWLDGTVVKGCWGCSVMDWLLRRYLEIVFPAGDHVYPGLKTELHSMRSTLESIYKDMRQCPLLGCGDKSVISRLSQEAERKSDNGTRKGLSELDTLFSRLEEYLHSRK.

The signal sequence occupies residues Met-1–Ala-19. 2 disulfides stabilise this stretch: Cys-37–Cys-127 and Cys-81–Cys-132. Asn-151 carries N-linked (GlcNAc...) asparagine; by host glycosylation.

Belongs to the IL-10 family. Homodimer; disulfide-linked.

It is found in the secreted. In terms of biological role, functional viral IL-10 homolog. Can bind to the human IL-10 receptor and compete with human IL-10 for binding sites. Requires both subunits of the human IL-10 receptor complex to induce signal transduction events and biological activities. IL-10 signaling pathway has several immunosuppressive activities that are exploited by the virus. Inhibits TLR-induced type I interferon production in host plasmacytoid dendritic cells. The protein is Viral interleukin-10 homolog (UL111A) of Human cytomegalovirus (strain AD169) (HHV-5).